The following is a 375-amino-acid chain: Hemolysin BL-binding component (375 aa).

Residues 1 to 31 form the signal peptide; sequence MIKKIPYKLLAVSTLLTITTANVVSPVATFA. A helical membrane pass occupies residues 232–252; sequence FNVMKGAILGLPIIGGIIVGV.

As to quaternary structure, composed of a binding component, B, and two lytic components, L1 and L2. All three subunits act synergically to cause hemolysis.

It is found in the secreted. It localises to the host cell membrane. Cytotoxic protein, part of the enterotoxin complex. Responsible for binding to erythrocytes. This enterotoxin is thought to be the cause of the diarrheal form of gastroenteritis caused by food-borne strains of B.cereus. This Bacillus cereus protein is Hemolysin BL-binding component (hblA).